A 61-amino-acid chain; its full sequence is Large ribosomal subunit protein bL32 (61 aa).

Residues 1 to 16 are compositionally biased toward basic residues; the sequence is MAVPRRKTSPSRRGMR. Positions 1-61 are disordered; that stretch reads MAVPRRKTSP…RQVLKAKSDS (61 aa). Basic and acidic residues predominate over residues 27–44; that stretch reads YAEDKDSGELRRPHHLDL.

The protein belongs to the bacterial ribosomal protein bL32 family.

The polypeptide is Large ribosomal subunit protein bL32 (Nitrobacter winogradskyi (strain ATCC 25391 / DSM 10237 / CIP 104748 / NCIMB 11846 / Nb-255)).